A 430-amino-acid chain; its full sequence is MQASIESTGNLERRLTFTLPQERLETHVGGRLRELARTTRIKGFRPGKVPTKVIEQRFGQQVRAEAMEGLLRETFDSAVREHSLRLAGNPRIDQGESDFDFVATFEVVPDFGDIDVTNLSVVRHTAEVTDADIDQMIENLRLQRRTWNPVERGAQVGDLVALETWSQAGNERLPAEGVETGSSVLGSGVMFDQIEKGLEGLSKGEDKALSIDFPADWRVPQLAGKTVQVHVKAVEVSEPVLPEVNKEFIKSFGVKSGDAEQFRADIRTNLERELKGALMNRLRREVGEQLIAAYAHVEMPPRLVENEAGSMLAQQVDQMRRSGRNPGEIPADAHQGFMDAAAKRVLVGLLVGEVARRNELRLESKRVSETLRLIASTYEEPEQVIEMYRNDPQLMSGLQSRVMEEQVIDWIAERAKHTEQSLSFQDAIRV.

The 86-residue stretch at 157-242 (GDLVALETWS…AVEVSEPVLP (86 aa)) folds into the PPIase FKBP-type domain.

It belongs to the FKBP-type PPIase family. Tig subfamily.

Its subcellular location is the cytoplasm. The enzyme catalyses [protein]-peptidylproline (omega=180) = [protein]-peptidylproline (omega=0). Involved in protein export. Acts as a chaperone by maintaining the newly synthesized protein in an open conformation. Functions as a peptidyl-prolyl cis-trans isomerase. The polypeptide is Trigger factor (Xanthomonas campestris pv. campestris (strain ATCC 33913 / DSM 3586 / NCPPB 528 / LMG 568 / P 25)).